A 662-amino-acid chain; its full sequence is Protein translocase subunit SecA 2 (662 aa).

ATP is bound by residues glutamine 110, 128 to 132 (GEGKT), and aspartate 538.

Belongs to the SecA family. As to quaternary structure, monomer and homodimer. Part of the essential Sec protein translocation apparatus which comprises SecA, SecYEG and auxiliary proteins SecDF. Other proteins may also be involved.

It localises to the cell inner membrane. Its subcellular location is the cytoplasm. The enzyme catalyses ATP + H2O + cellular proteinSide 1 = ADP + phosphate + cellular proteinSide 2.. Part of the Sec protein translocase complex. Interacts with the SecYEG preprotein conducting channel. Has a central role in coupling the hydrolysis of ATP to the transfer of proteins into and across the cell membrane, serving as an ATP-driven molecular motor driving the stepwise translocation of polypeptide chains across the membrane. The sequence is that of Protein translocase subunit SecA 2 from Chlorobium chlorochromatii (strain CaD3).